The primary structure comprises 245 residues: Ribonuclease PH (245 aa).

Residues arginine 87 and 125–127 (GTR) contribute to the phosphate site.

The protein belongs to the RNase PH family. In terms of assembly, homohexameric ring arranged as a trimer of dimers.

The catalysed reaction is tRNA(n+1) + phosphate = tRNA(n) + a ribonucleoside 5'-diphosphate. Phosphorolytic 3'-5' exoribonuclease that plays an important role in tRNA 3'-end maturation. Removes nucleotide residues following the 3'-CCA terminus of tRNAs; can also add nucleotides to the ends of RNA molecules by using nucleoside diphosphates as substrates, but this may not be physiologically important. Probably plays a role in initiation of 16S rRNA degradation (leading to ribosome degradation) during starvation. In Streptomyces griseus subsp. griseus (strain JCM 4626 / CBS 651.72 / NBRC 13350 / KCC S-0626 / ISP 5235), this protein is Ribonuclease PH.